The chain runs to 932 residues: MTVDYKNTLNLPETGFPMRGDLAKREPNMLKSWYEKDLYQKIRQASKGKKSFILHDGPPYANGTIHIGHAVNKILKDIIVKSKTALGYDSPYIPGWDCHGLPIELKVEGLVGKPNQNISAAQFREACRQYAAEQVEGQKKDFIRLGVLGDWDNPYLTMNYHTEANIIRAFGKAVENGHLYKGSKPVHWCLDCASSLAEAEVEYEDKVSPSIYVRFSAVDSDAVLAKFNATDKGTGNISAVIWTTTPWTIPSNRAIAIHENLDYQLVQFNDERVILAKDLVEEVAKAAGVEQVVILGESKGKDLEWLRFQHPFYDFSVPFILGDHVTTDGGTGLVHTAPDHGHDDYIIAQKNGIEMAGLIGNDGLFKADVPFFAGKGVFESNDLVVAKLQEVGAMLKFSKIKHSYPHCWRHKTPIIFRATPQWFIGMEKQGLRQQALSEIKKVRWIPDWGQARIEKMVENRPDWCISRQRTWGVPVALFIHKETEELHPRTVELVEEVAKRVEQKGIQAWWDLDTAELLGADADNYIKVPDTLDVWFDSGSTYYSVVKDRPEFNGQEADMYLEGSDQHRGWFMSSLMLSTATDNKAPYKQVLTHGFTVDGQGRKMSKSIGNIVTPQEVMDKFGGDILRLWVASTDYTGEISVSDEILKRAADAYRRIRNTARFLLANLNGFDPKRDLVKPEEMMVLDRWAVDCAYQAQNEIKDAYDNYQFHAVIQRLMKFCSIEMGSFYLDIIKDRQYTTKADSLARRSCQTALWHIAEALVRWIAPVLSFTADEIWQYIPGERGEFVFTEEFYNGLFALDANEQMNDAYWQQVITLRNEVNRVLEQARNDKIIGAALEAELTIYANDTYAPLLAKLQNELRFVLLTSKAEVKPLADADVAEGEVKGFAVKVVRSANHKCPRCWHYSDSKDAESLCSRCDENVNGQGEVRQFA.

The short motif at 59–69 is the 'HIGH' region element; the sequence is PYANGTIHIGH. Glutamate 562 contacts L-isoleucyl-5'-AMP. The short motif at 603 to 607 is the 'KMSKS' region element; that stretch reads KMSKS. Residue lysine 606 coordinates ATP. Zn(2+) contacts are provided by cysteine 899, cysteine 902, cysteine 915, and cysteine 918.

This sequence belongs to the class-I aminoacyl-tRNA synthetase family. IleS type 1 subfamily. In terms of assembly, monomer. Zn(2+) is required as a cofactor.

The protein localises to the cytoplasm. It catalyses the reaction tRNA(Ile) + L-isoleucine + ATP = L-isoleucyl-tRNA(Ile) + AMP + diphosphate. Catalyzes the attachment of isoleucine to tRNA(Ile). As IleRS can inadvertently accommodate and process structurally similar amino acids such as valine, to avoid such errors it has two additional distinct tRNA(Ile)-dependent editing activities. One activity is designated as 'pretransfer' editing and involves the hydrolysis of activated Val-AMP. The other activity is designated 'posttransfer' editing and involves deacylation of mischarged Val-tRNA(Ile). The sequence is that of Isoleucine--tRNA ligase from Pasteurella multocida (strain Pm70).